The following is a 156-amino-acid chain: Small ribosomal subunit protein uS7 (156 aa).

It belongs to the universal ribosomal protein uS7 family. Part of the 30S ribosomal subunit. Contacts proteins S9 and S11.

In terms of biological role, one of the primary rRNA binding proteins, it binds directly to 16S rRNA where it nucleates assembly of the head domain of the 30S subunit. Is located at the subunit interface close to the decoding center, probably blocks exit of the E-site tRNA. The protein is Small ribosomal subunit protein uS7 of Blochmanniella pennsylvanica (strain BPEN).